The following is a 174-amino-acid chain: ATP synthase subunit delta (174 aa).

The protein belongs to the ATPase delta chain family. As to quaternary structure, F-type ATPases have 2 components, F(1) - the catalytic core - and F(0) - the membrane proton channel. F(1) has five subunits: alpha(3), beta(3), gamma(1), delta(1), epsilon(1). F(0) has three main subunits: a(1), b(2) and c(10-14). The alpha and beta chains form an alternating ring which encloses part of the gamma chain. F(1) is attached to F(0) by a central stalk formed by the gamma and epsilon chains, while a peripheral stalk is formed by the delta and b chains.

Its subcellular location is the cell inner membrane. F(1)F(0) ATP synthase produces ATP from ADP in the presence of a proton or sodium gradient. F-type ATPases consist of two structural domains, F(1) containing the extramembraneous catalytic core and F(0) containing the membrane proton channel, linked together by a central stalk and a peripheral stalk. During catalysis, ATP synthesis in the catalytic domain of F(1) is coupled via a rotary mechanism of the central stalk subunits to proton translocation. Its function is as follows. This protein is part of the stalk that links CF(0) to CF(1). It either transmits conformational changes from CF(0) to CF(1) or is implicated in proton conduction. In Helicobacter hepaticus (strain ATCC 51449 / 3B1), this protein is ATP synthase subunit delta.